Here is a 151-residue protein sequence, read N- to C-terminus: 3-hydroxyacyl-[acyl-carrier-protein] dehydratase FabZ (151 aa).

H54 is an active-site residue.

Belongs to the thioester dehydratase family. FabZ subfamily. Oligomer. In terms of processing, the N-terminus is blocked.

The protein resides in the cytoplasm. The catalysed reaction is a (3R)-hydroxyacyl-[ACP] = a (2E)-enoyl-[ACP] + H2O. In terms of biological role, involved in unsaturated fatty acids biosynthesis. Catalyzes the dehydration of short chain beta-hydroxyacyl-ACPs and long chain saturated and unsaturated beta-hydroxyacyl-ACPs. This chain is 3-hydroxyacyl-[acyl-carrier-protein] dehydratase FabZ, found in Escherichia coli O9:H4 (strain HS).